The primary structure comprises 75 residues: Brevinin-2SN2 (75 aa).

The signal sequence occupies residues 1 to 22; that stretch reads MFTLKKPLLFLFFLGTISLSFC. Residues 23–40 constitute a propeptide, removed in mature form; that stretch reads EEERGADEDDGGEMTEEE. A disulfide bridge links C69 with C75.

The protein belongs to the frog skin active peptide (FSAP) family. Brevinin subfamily. As to expression, expressed by the skin glands.

It localises to the secreted. Its function is as follows. Antimicrobial peptide. Active against some Gram-negative and a variety of Gram-positive bacterial strains. Active against fungus C.glabrata 090902 but not against C.albicans ATCC 10231. Shows hemolytic activity against human erythrocytes. This Sylvirana spinulosa (Fine-spined frog) protein is Brevinin-2SN2.